The primary structure comprises 187 residues: Orotate phosphoribosyltransferase (187 aa).

Residues arginine 98, lysine 99, lysine 102, histidine 104, and 128 to 136 (EDVTTTGGS) contribute to the 5-phospho-alpha-D-ribose 1-diphosphate site. Residues threonine 132 and arginine 160 each coordinate orotate.

This sequence belongs to the purine/pyrimidine phosphoribosyltransferase family. PyrE subfamily. Homodimer. Mg(2+) is required as a cofactor.

The catalysed reaction is orotidine 5'-phosphate + diphosphate = orotate + 5-phospho-alpha-D-ribose 1-diphosphate. The protein operates within pyrimidine metabolism; UMP biosynthesis via de novo pathway; UMP from orotate: step 1/2. In terms of biological role, catalyzes the transfer of a ribosyl phosphate group from 5-phosphoribose 1-diphosphate to orotate, leading to the formation of orotidine monophosphate (OMP). This Rhodopseudomonas palustris (strain BisB5) protein is Orotate phosphoribosyltransferase.